Here is a 405-residue protein sequence, read N- to C-terminus: Molybdopterin molybdenumtransferase 2 (405 aa).

It belongs to the MoeA family. It depends on Mg(2+) as a cofactor.

The enzyme catalyses adenylyl-molybdopterin + molybdate = Mo-molybdopterin + AMP + H(+). It participates in cofactor biosynthesis; molybdopterin biosynthesis. Functionally, catalyzes the insertion of molybdate into adenylated molybdopterin with the concomitant release of AMP. The sequence is that of Molybdopterin molybdenumtransferase 2 (moaE2) from Mycobacterium tuberculosis (strain CDC 1551 / Oshkosh).